The sequence spans 193 residues: Thymidine kinase (193 aa).

ATP-binding positions include 16–23 and 89–92; these read GPMFSGKS and DEIQ. The Proton acceptor role is filled by E90. 4 residues coordinate Zn(2+): C146, C149, C184, and C187.

The protein belongs to the thymidine kinase family. In terms of assembly, homotetramer.

It is found in the cytoplasm. It catalyses the reaction thymidine + ATP = dTMP + ADP + H(+). This is Thymidine kinase from Thermoanaerobacter pseudethanolicus (strain ATCC 33223 / 39E) (Clostridium thermohydrosulfuricum).